The chain runs to 813 residues: MAEEEKIRQTIQELPLLPLRGIIVFPYMVMHLDVGRERSVNAIEEAMAQDRIIFLATQKEAQTDQPGAEDIYQIGVIAEIKQLLKLPGGTIRVLVEGLARAEILEYIDMEPLIRVRVREHIEPDVKSNAVEALMRSLINQFEQYVKISKKIPPETFVSVVAVEDPGRLTDTISSHLTLKTQDKQRILEALDVTERLEILTEILAREMEILELERKINVRVRKQMEKTQKEYYLREQIKAIQKELGEKEDRQAEGEDLRNKIAKAKLPKEVEEKALREVERLEKMPPMVAEATVVRNYLDWLLALPWAKQTKDRLDIDKAEAILNEDHFGLDKVKERIIEYLAIRKLAQKMKGPIICFVGPPGVGKTSLARSIARALERKFVRLSLGGVRDEAEIRGHRRTYVGAMPGRLIQGLRTAGSKNPVFLLDEIDKMSMDFRGDPASALLEVLDPEQNSTFSDHFIEVPFDLSKVLFITTANGMHNIPRPLLDRMEVIYIPGYTEEEKTRIALDHLVPKQLKEHGLKKEQVQISENTVRRLIREYTREAGVRNLEREIASLCRKSARAIVKNPERRLSISAGNLPSYLGIPRFRYGLAEAESQVGVATGLAWTETGGDTLAIEVAHMPGKGNLALTGKLGDVMKESAQASLTYVRSRARELGIADNFHQNTDIHIHVPEGAIPKDGPSAGITIATALTSALSRRPVRREVAMTGEITLRGRVLPVGGIKEKMLAANRAGCTTVILPAENKKDLEEVPANVKKKLRFVLVEHMDQVIREALLEPVPVQAPEPPETIPAAIETSVPVYQGMLEETPPGLQT.

Residues 14–207 (LPLLPLRGII…ILTEILAREM (194 aa)) form the Lon N-terminal domain. 359 to 366 (GPPGVGKT) provides a ligand contact to ATP. One can recognise a Lon proteolytic domain in the interval 595–776 (ESQVGVATGL…DQVIREALLE (182 aa)). Residues S682 and K725 contribute to the active site.

This sequence belongs to the peptidase S16 family. Homohexamer. Organized in a ring with a central cavity.

It localises to the cytoplasm. The enzyme catalyses Hydrolysis of proteins in presence of ATP.. Functionally, ATP-dependent serine protease that mediates the selective degradation of mutant and abnormal proteins as well as certain short-lived regulatory proteins. Required for cellular homeostasis and for survival from DNA damage and developmental changes induced by stress. Degrades polypeptides processively to yield small peptide fragments that are 5 to 10 amino acids long. Binds to DNA in a double-stranded, site-specific manner. This is Lon protease from Heliobacterium modesticaldum (strain ATCC 51547 / Ice1).